We begin with the raw amino-acid sequence, 1011 residues long: MKIRINDLARELEVKSKAILDALTKVGVTEKKTHSSSIEDHEAVLVKKYIHEHGTEESPRRRSAGEDEFKPKIDLSKISKPGDVLKALTQKAAPPPPPPPPPRPAVKAPSPVSQEPRPPAVPPAPQKPAVFARPASETVHTPPEPPKPRFITPASVAAQRPVITPPKPPVPPAPPVAVAPPAVIEPAAPAEEPKAAAPATTAPEAPEVKAPVSPERVAPAADTGAHVTAKPEAPAAPGAATPAPTPGRPLPGVPLRQQTPGRRMIVPQTGPRPVYSAPPPAPPRPTPPPQMSQGAGTRPGMPVRGQPIFQRRPQSGPGGGSGGPGGFQRPGGPPRPGDRPRGPHPTRQFPSGPRPMGGIGLAPPGAPANKPAGRPAPARRPGQRYVPRGQKEGPMKGFVPPPRLSLSNEPLPITRNITISEGISVKDLAEKLGIRAKDLIARLLARGVFATVNQTLEASLASEMANHFGASTDVITFEDQLAQETAKAAGETPEEAAANAVVRPPVVTIMGHVDHGKTSLLDAIRATDVAGGEAGGITQHIGAYKVAIGDPNSPAFGREIVFLDTPGHEAFTRMRARGSKITDIVVIVVAADDGVMPQTVEAIDHARAANVPIIVAVNKIDKPDAMPERVKKQLADRGLMPEDWGGNTVFVDVSAKQKTNLNLLMEMICLVADLGDLKANPDRMASGTVVEAKLDRGRGPVATVLVQNGTLRTSDNFVVGNAFGKVRAMFNDRGVSLDTAGPSTPVEIIGLETLPQAGDQFTVVADREKARDISEYREGRAREAQLAKSSRVSLEGLAEQLKTAGQKDLPIILKGDVQGSVEVLNDLLSKMSTEKVKITMIRSGVGAITESDVLLASASNAIIIGFNVRPERKAQELAVQEGVDIRLHSIIYELQDEMKKAMLGLLEPIIKETYQGRADVKDTFRIPKVGTIAGCQVADGIIKRDSHVRLVRDNVVIYTGKIGSLKRFKDDASEVRNGMECGIGIAGYGDIRSGDVIEAFTSEKIAADSLH.

Basic and acidic residues predominate over residues 49-77 (YIHEHGTEESPRRRSAGEDEFKPKIDLSK). Disordered regions lie at residues 49–152 (YIHE…RFIT) and 187–407 (AAPA…LSLS). Residues 93–104 (APPPPPPPPPRP) show a composition bias toward pro residues. A compositionally biased stretch (low complexity) spans 105 to 115 (AVKAPSPVSQE). The segment covering 116–126 (PRPPAVPPAPQ) has biased composition (pro residues). Low complexity-rich tracts occupy residues 187-212 (AAPA…KAPV) and 228-242 (TAKP…AATP). Pro residues-rich tracts occupy residues 243–252 (APTPGRPLPG) and 276–290 (SAPP…PPPQ). The span at 316 to 329 (GPGGGSGGPGGFQR) shows a compositional bias: gly residues. Over residues 361–380 (LAPPGAPANKPAGRPAPARR) the composition is skewed to low complexity. A tr-type G domain is found at 502–678 (VRPPVVTIMG…CLVADLGDLK (177 aa)). Residues 511–518 (GHVDHGKT) are G1. 511-518 (GHVDHGKT) is a binding site for GTP. The tract at residues 536 to 540 (GITQH) is G2. The segment at 564–567 (DTPG) is G3. GTP contacts are provided by residues 564–568 (DTPGH) and 618–621 (NKID). Residues 618-621 (NKID) are G4. The interval 654–656 (SAK) is G5.

Belongs to the TRAFAC class translation factor GTPase superfamily. Classic translation factor GTPase family. IF-2 subfamily.

It is found in the cytoplasm. One of the essential components for the initiation of protein synthesis. Protects formylmethionyl-tRNA from spontaneous hydrolysis and promotes its binding to the 30S ribosomal subunits. Also involved in the hydrolysis of GTP during the formation of the 70S ribosomal complex. The chain is Translation initiation factor IF-2 from Koribacter versatilis (strain Ellin345).